The chain runs to 338 residues: Eukaryotic translation initiation factor 3 subunit H (338 aa).

One can recognise an MPN domain in the interval 22–154; the sequence is VQCDGLAVMK…LKAYRLTPQA (133 aa).

Belongs to the eIF-3 subunit H family. As to quaternary structure, component of the eukaryotic translation initiation factor 3 (eIF-3) complex. The eIF-3 complex interacts with pix. Interacts with mxt.

It localises to the cytoplasm. Component of the eukaryotic translation initiation factor 3 (eIF-3) complex, which is involved in protein synthesis of a specialized repertoire of mRNAs and, together with other initiation factors, stimulates binding of mRNA and methionyl-tRNAi to the 40S ribosome. The eIF-3 complex specifically targets and initiates translation of a subset of mRNAs involved in cell proliferation. This chain is Eukaryotic translation initiation factor 3 subunit H, found in Drosophila yakuba (Fruit fly).